Consider the following 434-residue polypeptide: D-amino acid dehydrogenase (434 aa).

3–17 (VLVLGSGVIGTTSAW) provides a ligand contact to FAD.

It belongs to the DadA oxidoreductase family. The cofactor is FAD.

The enzyme catalyses a D-alpha-amino acid + A + H2O = a 2-oxocarboxylate + AH2 + NH4(+). The protein operates within amino-acid degradation; D-alanine degradation; NH(3) and pyruvate from D-alanine: step 1/1. Oxidative deamination of D-amino acids. The polypeptide is D-amino acid dehydrogenase (Stenotrophomonas maltophilia (strain K279a)).